The sequence spans 484 residues: Mitochondrial metal transporter 2 (484 aa).

Residues 1-56 (MLRISIDSIKQFGSFVPGYNNTSYHAAGRAIRTSSLYSTMISANPRRCLHSSKLLN) constitute a mitochondrion transit peptide. The span at 73–82 (SSQNGSNSRQ) shows a compositional bias: polar residues. Residues 73-114 (SSQNGSNSRQNESEGKKEGKASSVKSLLQHTHSHSHTHMHDN) are disordered. Positions 83-92 (NESEGKKEGK) are enriched in basic and acidic residues. 5 helical membrane-spanning segments follow: residues 132–152 (ITWIGLASNVGMAVGKFVGGI), 158–178 (ALLADSVHALSDLVSDFLTLF), 209–229 (ILAMAGISIGWSSLCAIVGPV), 256–276 (ATNVNAVWIAAGSILVKEWVF), and 316–336 (YFFNIQSLDNLGGLVVSGLII). The interval 453 to 484 (DSKGDLEHSHDTKSTNHTHTHSDSADTHTHKH) is disordered.

The protein belongs to the cation diffusion facilitator (CDF) transporter (TC 2.A.4) family. SLC30A subfamily.

It is found in the mitochondrion membrane. Mitochondrial metal transporter involved in mitochondrial iron accumulation. The sequence is that of Mitochondrial metal transporter 2 (MMT2) from Saccharomyces cerevisiae (strain ATCC 204508 / S288c) (Baker's yeast).